Here is a 177-residue protein sequence, read N- to C-terminus: Ribosome maturation factor RimP (177 aa).

This sequence belongs to the RimP family.

The protein localises to the cytoplasm. Its function is as follows. Required for maturation of 30S ribosomal subunits. The chain is Ribosome maturation factor RimP from Mycobacterium marinum (strain ATCC BAA-535 / M).